The chain runs to 1722 residues: Lymphocyte antigen 75 (1722 aa).

An N-terminal signal peptide occupies residues 1–27 (MRTGWATPRRPAGLLMLLFWFFDLAEP). Residues 28-1666 (SGRAANDPFT…VVCKVPLGPD (1639 aa)) are Extracellular-facing. The region spanning 33-156 (NDPFTIVHGN…ESLCDQPYHE (124 aa)) is the Ricin B-type lectin domain. An N-linked (GlcNAc...) asparagine glycan is attached at N135. One can recognise a Fibronectin type-II domain in the interval 164–211 (SYGRPCEFPFLIDGTWHHDCILDEDHSGPWCATTLNYEYDRKWGICLK). 4 cysteine pairs are disulfide-bonded: C169–C194, C183–C209, C247–C340, and C317–C332. Positions 225 to 341 (QFGSCYQFNT…CEAQLPYVCR (117 aa)) constitute a C-type lectin 1 domain. N-linked (GlcNAc...) asparagine glycosylation is found at N345 and N377. 4 C-type lectin domains span residues 368–486 (NNGF…YVCK), 493–625 (NDAS…ICKK), 652–778 (ASLS…IYLR), and 818–931 (IEGS…FICE). 2 cysteine pairs are disulfide-bonded: C389-C485 and C462-C477. An N-linked (GlcNAc...) asparagine glycan is attached at N529. Residues C597 and C614 are joined by a disulfide bond. 2 cysteine pairs are disulfide-bonded: C840-C930 and C904-C922. N-linked (GlcNAc...) asparagine glycans are attached at residues N843 and N865. Y933 carries the post-translational modification Phosphotyrosine. Residues N934, N1076, and N1103 are each glycosylated (N-linked (GlcNAc...) asparagine). The C-type lectin 6 domain occupies 958-1091 (FQNKCFLKIK…ERHFVSLCQK (134 aa)). Cysteines 1060 and 1080 form a disulfide. The C-type lectin 7 domain maps to 1110–1222 (YLNNLYKIIP…DNQPGAICYY (113 aa)). An intrachain disulfide couples C1197 to C1211. Residues N1225, N1320, and N1392 are each glycosylated (N-linked (GlcNAc...) asparagine). The C-type lectin 8 domain maps to 1251 to 1374 (FQNCCYNFII…VIEEAVYFHQ (124 aa)). 2 consecutive C-type lectin domains span residues 1401–1513 (YEDG…ICYK) and 1542–1661 (YKGH…VCKV). A disulfide bond links C1488 and C1502. 2 N-linked (GlcNAc...) asparagine glycosylation sites follow: N1593 and N1626. A disulfide bridge connects residues C1635 and C1650. Residues 1667–1691 (YTAIAIIVATLSILVLMGGLIWFLF) traverse the membrane as a helical segment. Residues 1692 to 1722 (QRHRLHLAGFSSVRYAQGVNEDEIMLPSFHD) are Cytoplasmic-facing. S1703 and S1719 each carry phosphoserine.

Post-translationally, N-glycosylated. Expressed in spleen, thymus, colon and peripheral blood lymphocytes. Detected in myeloid and B-lymphoid cell lines. Isoform 2 and isoform 3 are expressed in malignant Hodgkin lymphoma cells called Hodgkin and Reed-Sternberg (HRS) cells.

It is found in the membrane. Acts as an endocytic receptor to direct captured antigens from the extracellular space to a specialized antigen-processing compartment. Causes reduced proliferation of B-lymphocytes. This Homo sapiens (Human) protein is Lymphocyte antigen 75 (LY75).